We begin with the raw amino-acid sequence, 127 residues long: Ribonuclease P protein component (127 aa).

The protein belongs to the RnpA family. In terms of assembly, consists of a catalytic RNA component (M1 or rnpB) and a protein subunit.

The enzyme catalyses Endonucleolytic cleavage of RNA, removing 5'-extranucleotides from tRNA precursor.. In terms of biological role, RNaseP catalyzes the removal of the 5'-leader sequence from pre-tRNA to produce the mature 5'-terminus. It can also cleave other RNA substrates such as 4.5S RNA. The protein component plays an auxiliary but essential role in vivo by binding to the 5'-leader sequence and broadening the substrate specificity of the ribozyme. The protein is Ribonuclease P protein component of Corynebacterium urealyticum (strain ATCC 43042 / DSM 7109).